A 95-amino-acid polypeptide reads, in one-letter code: DNA-binding protein CENSYa_1764 (95 aa).

Positions 1–21 are disordered; that stretch reads MSYTDPDDSLPEHVPGEAEMS.

This sequence belongs to the PDCD5 family.

The chain is DNA-binding protein CENSYa_1764 from Cenarchaeum symbiosum (strain A).